The primary structure comprises 521 residues: Probable inorganic phosphate transporter 1-3 (521 aa).

The Cytoplasmic portion of the chain corresponds to Met1–Ala24. A helical transmembrane segment spans residues Ile25–Val45. Residues Thr46–Ala70 are Extracellular-facing. A helical membrane pass occupies residues Ala71–Leu91. Residues Gly92–Lys99 are Cytoplasmic-facing. The helical transmembrane segment at Val100–Gly120 threads the bilayer. Over Asn121–Cys131 the chain is Extracellular. The chain crosses the membrane as a helical span at residues Phe132–Met152. The Cytoplasmic segment spans residues Ser153–Arg161. The helical transmembrane segment at Gly162–Val182 threads the bilayer. The Extracellular segment spans residues Ala183–Ala211. A helical transmembrane segment spans residues Asp212–Trp232. Residues Arg233–Arg292 lie on the Cytoplasmic side of the membrane. The helical transmembrane segment at His293–Ser313 threads the bilayer. Residues Gln314 to Thr348 are Extracellular-facing. Residues Leu349–Ile369 traverse the membrane as a helical segment. Residues Gly370 to Arg371 lie on the Cytoplasmic side of the membrane. A helical transmembrane segment spans residues Phe372–Pro392. Residues Tyr393 to Arg402 lie on the Extracellular side of the membrane. The helical transmembrane segment at Ile403–Thr423 threads the bilayer. Residues Thr424–His441 lie on the Cytoplasmic side of the membrane. Residues Gly442–Ala462 form a helical membrane-spanning segment. At Ala463 to Ser484 the chain is on the extracellular side. A helical membrane pass occupies residues Leu485–Pro505. The Cytoplasmic segment spans residues Lys506–Lys521.

It belongs to the major facilitator superfamily. Phosphate:H(+) symporter (TC 2.A.1.9) family. As to expression, mainly expressed in roots, especially in the stele of the primary root, the pericycle and trichoblasts of secondary roots. To a lower extent, present in hydathodes and vascular tissues of young leaves.

It localises to the membrane. In terms of biological role, high-affinity transporter for external inorganic phosphate. This Arabidopsis thaliana (Mouse-ear cress) protein is Probable inorganic phosphate transporter 1-3 (PHT1-3).